The chain runs to 616 residues: Dihydroxy-acid dehydratase (616 aa).

Aspartate 81 lines the Mg(2+) pocket. Cysteine 122 lines the [2Fe-2S] cluster pocket. Positions 123 and 124 each coordinate Mg(2+). Lysine 124 carries the post-translational modification N6-carboxylysine. A [2Fe-2S] cluster-binding site is contributed by cysteine 195. Glutamate 491 contributes to the Mg(2+) binding site. The active-site Proton acceptor is serine 517.

This sequence belongs to the IlvD/Edd family. In terms of assembly, homodimer. [2Fe-2S] cluster serves as cofactor. Mg(2+) is required as a cofactor.

It carries out the reaction (2R)-2,3-dihydroxy-3-methylbutanoate = 3-methyl-2-oxobutanoate + H2O. The catalysed reaction is (2R,3R)-2,3-dihydroxy-3-methylpentanoate = (S)-3-methyl-2-oxopentanoate + H2O. It participates in amino-acid biosynthesis; L-isoleucine biosynthesis; L-isoleucine from 2-oxobutanoate: step 3/4. Its pathway is amino-acid biosynthesis; L-valine biosynthesis; L-valine from pyruvate: step 3/4. Its function is as follows. Functions in the biosynthesis of branched-chain amino acids. Catalyzes the dehydration of (2R,3R)-2,3-dihydroxy-3-methylpentanoate (2,3-dihydroxy-3-methylvalerate) into 2-oxo-3-methylpentanoate (2-oxo-3-methylvalerate) and of (2R)-2,3-dihydroxy-3-methylbutanoate (2,3-dihydroxyisovalerate) into 2-oxo-3-methylbutanoate (2-oxoisovalerate), the penultimate precursor to L-isoleucine and L-valine, respectively. This chain is Dihydroxy-acid dehydratase, found in Edwardsiella ictaluri (strain 93-146).